The following is a 308-amino-acid chain: Glutathione synthetase (308 aa).

An ATP-grasp domain is found at 120–304; it reads KLGALRFNNL…LADQVIARLL (185 aa). 146-202 lines the ATP pocket; that stretch reads AREQEEVVLKPLGGRAGQGLVRVAGAAPGLEALLELVTDQEQLPVMVQRFLPAVIEG. Mg(2+)-binding residues include E275 and N277.

The protein belongs to the prokaryotic GSH synthase family. The cofactor is Mg(2+). Mn(2+) is required as a cofactor.

The catalysed reaction is gamma-L-glutamyl-L-cysteine + glycine + ATP = glutathione + ADP + phosphate + H(+). It participates in sulfur metabolism; glutathione biosynthesis; glutathione from L-cysteine and L-glutamate: step 2/2. This chain is Glutathione synthetase, found in Prochlorococcus marinus (strain MIT 9313).